Consider the following 835-residue polypeptide: Leucine--tRNA ligase (835 aa).

The short motif at 36–46 (PYPSGKIHVGH) is the 'HIGH' region element. The 'KMSKS' region motif lies at 602–606 (KMSKS). Residue K605 participates in ATP binding.

Belongs to the class-I aminoacyl-tRNA synthetase family.

The protein resides in the cytoplasm. It carries out the reaction tRNA(Leu) + L-leucine + ATP = L-leucyl-tRNA(Leu) + AMP + diphosphate. This Rickettsia felis (strain ATCC VR-1525 / URRWXCal2) (Rickettsia azadi) protein is Leucine--tRNA ligase.